A 639-amino-acid chain; its full sequence is Coiled-coil domain-containing protein 27 (639 aa).

Positions 154-176 are disordered; sequence YPRKRSEPSDPSPTGSPTVVKKS. Positions 203–242 form a coiled coil; it reads QRFSEMESQMQKKDQEILTLQKEKEALKKQLKNLLRGKGT. Positions 291–385 are disordered; sequence ESSKELHVEP…EECHPKRSYS (95 aa). The span at 292–309 shows a compositional bias: basic and acidic residues; sequence SSKELHVEPGSAIEEKSS. Low complexity predominate over residues 310–320; it reads EGPPEEAAAAK. Composition is skewed to acidic residues over residues 336–350 and 358–369; these read GPEE…EVEG and EGEILVNEEEAS. Residues 370-380 show a composition bias toward basic and acidic residues; it reads WELREDEECHP.

The chain is Coiled-coil domain-containing protein 27 (Ccdc27) from Mus musculus (Mouse).